The sequence spans 360 residues: Cyclin-dependent kinase 10 (360 aa).

The Protein kinase domain occupies 39–323 (FEKLNRIGEG…SGDCLESSYF (285 aa)). ATP contacts are provided by residues 45-53 (IGEGTYGIV) and K68. Catalysis depends on D163, which acts as the Proton acceptor. Residue T196 is modified to Phosphothreonine. Residues 334–360 (LMPTFPHHRNKRAAPAAAEGQSKRCRP) are disordered.

Belongs to the protein kinase superfamily. CMGC Ser/Thr protein kinase family. CDC2/CDKX subfamily. Heterodimer with CCNQ, the interaction is required for kinase activity. Interacts with ETS2. Interacts with PRK2.

It localises to the cytoplasm. Its subcellular location is the cytoskeleton. It is found in the cilium basal body. It carries out the reaction L-seryl-[protein] + ATP = O-phospho-L-seryl-[protein] + ADP + H(+). It catalyses the reaction L-threonyl-[protein] + ATP = O-phospho-L-threonyl-[protein] + ADP + H(+). Cyclin-dependent kinase that phosphorylates the transcription factor ETS2 (in vitro) and positively controls its proteasomal degradation (in cells). Involved in the regulation of actin cytoskeleton organization through the phosphorylation of actin dynamics regulators such as PKN2. Is a negative regulator of ciliogenesis through phosphorylation of PKN2 and promotion of RhoA signaling. The chain is Cyclin-dependent kinase 10 (Cdk10) from Mus musculus (Mouse).